The following is a 562-amino-acid chain: Tissue-type plasminogen activator (562 aa).

The signal sequence occupies residues 1 to 20; the sequence is MNAMKRGLCCVLLLCGAVFA. Residues 21–32 constitute a propeptide that is removed on maturation; it reads LPSQEIHARVRR. The propeptide at 33–35 is removed by plasmin; that stretch reads GAR. In terms of domain architecture, Fibronectin type-I spans 39-81; it reads VICRDEKTQMIYQQHQSWLRPVLRSNRVEYCWCNSGRAQCHSV. Disulfide bonds link Cys-41-Cys-71, Cys-69-Cys-78, Cys-86-Cys-97, Cys-91-Cys-108, Cys-110-Cys-119, Cys-127-Cys-208, Cys-148-Cys-190, Cys-179-Cys-203, Cys-215-Cys-296, Cys-236-Cys-278, Cys-267-Cys-291, Cys-299-Cys-430, Cys-342-Cys-358, Cys-350-Cys-419, Cys-444-Cys-519, Cys-476-Cys-492, and Cys-509-Cys-537. The tract at residues 42–52 is important for binding to annexin A2; that stretch reads RDEKTQMIYQQ. Positions 82–120 constitute an EGF-like domain; sequence PVRSCSEPRCFNGGTCQQALYFSDFVCQCPEGFAGKCCE. O-linked (Fuc) threonine glycosylation is present at Thr-96. 2 Kringle domains span residues 126–208 and 214–296; these read TCYE…TPAC and DCYF…VPSC. N-linked (GlcNAc...) asparagine glycosylation is present at Asn-152. Residues 311–561 form the Peptidase S1 domain; sequence IKGGLFADIA…YLDWIHDNMR (251 aa). Active-site charge relay system residues include His-357 and Asp-406. Asn-483 carries N-linked (GlcNAc...) asparagine glycosylation. Ser-513 (charge relay system) is an active-site residue.

The protein belongs to the peptidase S1 family. As to quaternary structure, heterodimer of chain A and chain B held by a disulfide bond. Binds to fibrin with high affinity. This interaction leads to an increase in the catalytic efficiency of the enzyme due to an increase in affinity for plasminogen. Similarly, binding to heparin increases the activation of plasminogen. Binds to annexin A2, cytokeratin-8, fibronectin and laminin. Binds to mannose receptor and the low-density lipoprotein receptor-related protein (LRP1); these proteins are involved in TPA clearance. Binds LRP1B; binding is followed by internalization and degradation. Forms heterodimer with SERPINA5. Interacts with SERPINE1. In complex with SERPINE1, interacts with SORL1. The single chain, almost fully active enzyme, can be further processed into a two-chain fully active form by a cleavage after Arg-310 catalyzed by plasmin, tissue kallikrein or factor Xa.

Its subcellular location is the secreted. It is found in the extracellular space. The enzyme catalyses Specific cleavage of Arg-|-Val bond in plasminogen to form plasmin.. Its activity is regulated as follows. Inhibited by SERPINA5. Inhibited by SERPINE1. Functionally, converts the abundant, but inactive, zymogen plasminogen to plasmin by hydrolyzing a single Arg-Val bond in plasminogen. By controlling plasmin-mediated proteolysis, it plays an important role in tissue remodeling and degradation, in cell migration and many other physiopathological events. During oocyte activation, plays a role in cortical granule reaction in the zona reaction, which contributes to the block to polyspermy. This chain is Tissue-type plasminogen activator (PLAT), found in Pongo abelii (Sumatran orangutan).